A 429-amino-acid chain; its full sequence is Adenylosuccinate synthetase (429 aa).

GTP-binding positions include Gly12–Lys18 and Gly40–Thr42. Residue Asp13 is the Proton acceptor of the active site. Mg(2+) is bound by residues Asp13 and Gly40. IMP is bound by residues Asp13 to Lys16, Asn38 to His41, Thr128, Arg142, Gln223, Thr238, and Arg302. The Proton donor role is filled by His41. Position 298–304 (Val298–Arg304) interacts with substrate. Residues Arg304, Lys330–Asp332, and Gly412–Gly414 contribute to the GTP site.

This sequence belongs to the adenylosuccinate synthetase family. In terms of assembly, homodimer. Mg(2+) serves as cofactor.

It localises to the cytoplasm. The catalysed reaction is IMP + L-aspartate + GTP = N(6)-(1,2-dicarboxyethyl)-AMP + GDP + phosphate + 2 H(+). Its pathway is purine metabolism; AMP biosynthesis via de novo pathway; AMP from IMP: step 1/2. Its function is as follows. Plays an important role in the de novo pathway of purine nucleotide biosynthesis. Catalyzes the first committed step in the biosynthesis of AMP from IMP. The protein is Adenylosuccinate synthetase of Renibacterium salmoninarum (strain ATCC 33209 / DSM 20767 / JCM 11484 / NBRC 15589 / NCIMB 2235).